A 47-amino-acid polypeptide reads, in one-letter code: Large ribosomal subunit protein bL34 (47 aa).

It belongs to the bacterial ribosomal protein bL34 family.

This is Large ribosomal subunit protein bL34 from Mycobacteroides abscessus (strain ATCC 19977 / DSM 44196 / CCUG 20993 / CIP 104536 / JCM 13569 / NCTC 13031 / TMC 1543 / L948) (Mycobacterium abscessus).